The following is a 444-amino-acid chain: Pre-mRNA-splicing factor cwc25 (444 aa).

Disordered regions lie at residues 1-27 (MGSGDLNMKKSWHPQRSGNVAATQKAE), 168-385 (LASM…TDLD), and 397-425 (EAERAEREADEKARQQNKKFRGGDAGFMS). Residues 19–65 (NVAATQKAEAEAIAERKKLQQRLQEIEEERRKEEIQKALEAAGGKRK) adopt a coiled-coil conformation. Residues 186-199 (QRRHKHRSHHHRSD) show a composition bias toward basic residues. Composition is skewed to basic and acidic residues over residues 200-220 (RHRDRDDDRDRDSARDRDRDR) and 228-281 (DSRD…DDRS). Residues 282 to 293 (RRHRFPQGRSRS) are compositionally biased toward basic residues. Composition is skewed to basic and acidic residues over residues 305–344 (RREYSRERDSGGPSSRRDDRNSRDQNRPRRDYAKEDEQPK), 360–372 (DGDHKNAEEERAK), and 397–410 (EAERAEREADEKAR). Residues 364-417 (KNAEEERAKKLAAMQAAATDLDKAREERLKALAEAERAEREADEKARQQNKKFR) adopt a coiled-coil conformation.

The protein belongs to the CWC25 family. Associated with the spliceosome.

The protein resides in the nucleus. In terms of biological role, involved in pre-mRNA splicing. The chain is Pre-mRNA-splicing factor cwc25 (msp-6) from Neurospora crassa (strain ATCC 24698 / 74-OR23-1A / CBS 708.71 / DSM 1257 / FGSC 987).